The sequence spans 360 residues: SUN domain-containing protein 3 (360 aa).

The segment covering 1–10 (MSGRPNSRGS) has biased composition (polar residues). Positions 1–39 (MSGRPNSRGSSRLFRAPSEDASSGSSGSAVLPQEENPNA) are disordered. At 1-47 (MSGRPNSRGSSRLFRAPSEDASSGSSGSAVLPQEENPNASGLTRSWK) the chain is on the nuclear side. The chain crosses the membrane as a helical span at residues 48–67 (AVMGMVFILTLLLLGFINHM). Over 68–360 (KLKEKAFPQK…RVHGTPKDDS (293 aa)) the chain is Perinuclear space. Residues 103 to 142 (KEQLELLKKESQTLENNFREILFLIEQIDVLKALLRDMQD) adopt a coiled-coil conformation. The 162-residue stretch at 196–357 (GASVVEAGTS…YRFRVHGTPK (162 aa)) folds into the SUN domain.

As to quaternary structure, self-associates. Interacts with SYNE1 and SPAG4/SUN4. Proposed to form a spermatogenesis-specific LINC complex with SYNE1 during sperm head formation possibly implicating a SUN domain-based heterotrimer with SPAG4/SUN4 associating with SYNE1.

It is found in the membrane. The protein resides in the nucleus envelope. The protein localises to the nucleus inner membrane. As a probable component of the LINC (LInker of Nucleoskeleton and Cytoskeleton) complex, involved in the connection between the nuclear lamina and the cytoskeleton. The nucleocytoplasmic interactions established by the LINC complex play an important role in the transmission of mechanical forces across the nuclear envelope and in nuclear movement and positioning. May be involved in nuclear remodeling during sperm head formation in spermatogenesis. A probable SUN3:SYNE1 LINC complex may tether spermatid nuclei to posterior cytoskeletal structures such as the manchette. This chain is SUN domain-containing protein 3 (SUN3), found in Bos taurus (Bovine).